The sequence spans 406 residues: uncharacterized protein (406 aa).

Residue Gly-2 is the site of N-myristoyl glycine; by host attachment. Positions 291 to 406 (QLESTTEVKP…FQYNKPTYDI (116 aa)) are disordered. Positions 296–310 (TEVKPESTTEVKPES) are enriched in basic and acidic residues. Over residues 311–323 (TSEVQPESTTEFQ) the composition is skewed to polar residues. Low complexity-rich tracts occupy residues 324-333 (PESTTVVEPE), 341-351 (ESTTEFQPEST), and 359-369 (TTEPQVESTTE). Positions 370–406 (FQPESSTEPQVESTVEVQAESMNESSYFQYNKPTYDI) are enriched in polar residues.

This is an uncharacterized protein from Acanthamoeba polyphaga (Amoeba).